The primary structure comprises 120 residues: Ribonuclease P protein component (120 aa).

This sequence belongs to the RnpA family. As to quaternary structure, consists of a catalytic RNA component (M1 or rnpB) and a protein subunit.

It carries out the reaction Endonucleolytic cleavage of RNA, removing 5'-extranucleotides from tRNA precursor.. Its function is as follows. RNaseP catalyzes the removal of the 5'-leader sequence from pre-tRNA to produce the mature 5'-terminus. It can also cleave other RNA substrates such as 4.5S RNA. The protein component plays an auxiliary but essential role in vivo by binding to the 5'-leader sequence and broadening the substrate specificity of the ribozyme. The sequence is that of Ribonuclease P protein component from Bordetella avium (strain 197N).